The following is a 207-amino-acid chain: Holliday junction branch migration complex subunit RuvA (207 aa).

The tract at residues 1–64 (MISYIKGELA…EDECSLFGFL (64 aa)) is domain I. Residues 65 to 143 (TRDDLSMFKM…LDEVFESALS (79 aa)) form a domain II region. Residues 144–155 (KNKKADNNSNVS) form a flexible linker region. The domain III stretch occupies residues 156–207 (NVMMIRNDAVEALVSLGYSSKDALVAVKEVEDIENKDSETVLKEALKKLVKF).

It belongs to the RuvA family. As to quaternary structure, homotetramer. Forms an RuvA(8)-RuvB(12)-Holliday junction (HJ) complex. HJ DNA is sandwiched between 2 RuvA tetramers; dsDNA enters through RuvA and exits via RuvB. An RuvB hexamer assembles on each DNA strand where it exits the tetramer. Each RuvB hexamer is contacted by two RuvA subunits (via domain III) on 2 adjacent RuvB subunits; this complex drives branch migration. In the full resolvosome a probable DNA-RuvA(4)-RuvB(12)-RuvC(2) complex forms which resolves the HJ.

Its subcellular location is the cytoplasm. Functionally, the RuvA-RuvB-RuvC complex processes Holliday junction (HJ) DNA during genetic recombination and DNA repair, while the RuvA-RuvB complex plays an important role in the rescue of blocked DNA replication forks via replication fork reversal (RFR). RuvA specifically binds to HJ cruciform DNA, conferring on it an open structure. The RuvB hexamer acts as an ATP-dependent pump, pulling dsDNA into and through the RuvAB complex. HJ branch migration allows RuvC to scan DNA until it finds its consensus sequence, where it cleaves and resolves the cruciform DNA. This is Holliday junction branch migration complex subunit RuvA from Lachnospira eligens (strain ATCC 27750 / DSM 3376 / VPI C15-48 / C15-B4) (Eubacterium eligens).